Consider the following 153-residue polypeptide: 6,7-dimethyl-8-ribityllumazine synthase (153 aa).

Residues F22, A56–E58, and T80–I82 each bind 5-amino-6-(D-ribitylamino)uracil. Position 85–86 (S85–T86) interacts with (2S)-2-hydroxy-3-oxobutyl phosphate. The active-site Proton donor is H88. F113 serves as a coordination point for 5-amino-6-(D-ribitylamino)uracil. Residue R127 coordinates (2S)-2-hydroxy-3-oxobutyl phosphate.

Belongs to the DMRL synthase family. As to quaternary structure, forms an icosahedral capsid composed of 60 subunits, arranged as a dodecamer of pentamers.

It catalyses the reaction (2S)-2-hydroxy-3-oxobutyl phosphate + 5-amino-6-(D-ribitylamino)uracil = 6,7-dimethyl-8-(1-D-ribityl)lumazine + phosphate + 2 H2O + H(+). It functions in the pathway cofactor biosynthesis; riboflavin biosynthesis; riboflavin from 2-hydroxy-3-oxobutyl phosphate and 5-amino-6-(D-ribitylamino)uracil: step 1/2. In terms of biological role, catalyzes the formation of 6,7-dimethyl-8-ribityllumazine by condensation of 5-amino-6-(D-ribitylamino)uracil with 3,4-dihydroxy-2-butanone 4-phosphate. This is the penultimate step in the biosynthesis of riboflavin. The sequence is that of 6,7-dimethyl-8-ribityllumazine synthase from Actinobacillus pleuropneumoniae serotype 3 (strain JL03).